Reading from the N-terminus, the 277-residue chain is Putative phosphoenolpyruvate synthase regulatory protein (277 aa).

Residue 157 to 164 (GVSRCGKT) coordinates ADP.

It belongs to the pyruvate, phosphate/water dikinase regulatory protein family. PSRP subfamily.

It catalyses the reaction [pyruvate, water dikinase] + ADP = [pyruvate, water dikinase]-phosphate + AMP + H(+). The catalysed reaction is [pyruvate, water dikinase]-phosphate + phosphate + H(+) = [pyruvate, water dikinase] + diphosphate. Bifunctional serine/threonine kinase and phosphorylase involved in the regulation of the phosphoenolpyruvate synthase (PEPS) by catalyzing its phosphorylation/dephosphorylation. This Cronobacter sakazakii (strain ATCC BAA-894) (Enterobacter sakazakii) protein is Putative phosphoenolpyruvate synthase regulatory protein.